Reading from the N-terminus, the 98-residue chain is uncharacterized protein (98 aa).

It belongs to the YciI family. In terms of assembly, homodimer.

This is an uncharacterized protein from Haemophilus influenzae (strain ATCC 51907 / DSM 11121 / KW20 / Rd).